Reading from the N-terminus, the 647-residue chain is Sodium/nucleoside cotransporter 1 (647 aa).

Topologically, residues 1–79 (MEDNTPRQRD…VRRFCREHTQ (79 aa)) are cytoplasmic. Residues 34-58 (EGRAPGSDSSPAEVGGGWSKAGPEH) are disordered. Residues 80–103 (LFRWICTGLLCTAFAAFLLIACLL) traverse the membrane as a helical segment. Residues 104-108 (DFQRA) lie on the Extracellular side of the membrane. The helical transmembrane segment at 109-127 (LALFVLFCVVLFFLAHSLL) threads the bilayer. Topologically, residues 128 to 146 (KRLLGPKLLRCVKPLRHPC) are cytoplasmic. Residues 147–166 (LNLWFKRGLALAAFLGLVLW) form a helical membrane-spanning segment. The Extracellular portion of the chain corresponds to 167–177 (LVLDTAQRPEQ). The helical transmembrane segment at 178–194 (LVSFGGICVFILLLFAG) threads the bilayer. At 195-200 (SKHHRA) the chain is on the cytoplasmic side. A helical transmembrane segment spans residues 201-221 (VSWRAVSWGLGLQFALGLFVI). Residues 222 to 260 (RTEPGFIAFQWLGDQIQIFLSYTEAGSSFVFGEALVKDV) lie on the Extracellular side of the membrane. A helical membrane pass occupies residues 261-282 (FAFQVLPIIVFFSCAMSVLYYV). At 283–293 (GLMQWVILKIS) the chain is on the cytoplasmic side. Residues 294 to 317 (WLMQATMGTTATETLSVAGNIFVS) traverse the membrane as a helical segment. Residues 318-336 (QTEAPLLIRPYLADMTLSE) are Extracellular-facing. A helical transmembrane segment spans residues 337–359 (IHVVMTGGYATIAGSLLGAYISF). Residues 360 to 365 (GIDAAS) are Cytoplasmic-facing. The chain crosses the membrane as a helical span at residues 366-385 (LIAASVMAAPCALALSKLVY). Residues 386-422 (PEVEESKFKREEGVKLTYGDAQNLLEAASSGAAMSVR) are Extracellular-facing. A helical transmembrane segment spans residues 423–445 (VVTNIAANLIAFLAVLAFINAAL). Over 446 to 456 (SWLGDMVDVQG) the chain is Cytoplasmic. The helical transmembrane segment at 457–478 (LSFQLICSYVLRPVAFLMGVAW) threads the bilayer. Residues 479-533 (EDCPVVAELLGMKLFLNEFVAYQELSGYKQRRLAGAEEWVGSRKQWISVRAEILT) are Extracellular-facing. Residues 534 to 557 (TYALCGFANFSSIGIMLGGLTSMV) traverse the membrane as a helical segment. Topologically, residues 558 to 568 (PQRKGDFSQIV) are cytoplasmic. A helical transmembrane segment spans residues 569–591 (LRALCTGACVSLVNACVAGILYV). Topologically, residues 592 to 647 (PRGAEVDCVSFLNTTLSSSSFEVYQCCRQFFQSTSLEFSPEALDNCCRFYNHTICV) are extracellular. N-linked (GlcNAc...) asparagine glycans are attached at residues Asn-604 and Asn-642.

Belongs to the concentrative nucleoside transporter (CNT) (TC 2.A.41) family. N-glycosylated. N-glycosylation is required for localization to the plasma membrane and the transporter activity.

The protein localises to the cell membrane. The protein resides in the apical cell membrane. It carries out the reaction uridine(out) + Na(+)(out) = uridine(in) + Na(+)(in). It catalyses the reaction thymidine(out) + Na(+)(out) = thymidine(in) + Na(+)(in). The enzyme catalyses cytidine(out) + Na(+)(out) = cytidine(in) + Na(+)(in). The catalysed reaction is adenosine(out) + Na(+)(out) = adenosine(in) + Na(+)(in). With respect to regulation, due to its high apparent affinity but slow transport, adenosine could act as a negative regulator of pyrimidine transport under some conditions. Functionally, sodium and pyrimidine nucleoside symporter of the plasma membrane that imports uridine, thymidine and cytidine into cells by coupling their transport to the transmembrane sodium electrochemical gradient. Also transports adenosine, an atypical substrate transported with high apparent affinity, but low maximum velocity. Therefore, exhibits the transport characteristics of the nucleoside transport system cit or N2 subtype (N2/cit). Involved in renal nucleoside (re)absorption. In Sus scrofa (Pig), this protein is Sodium/nucleoside cotransporter 1 (SLC28A1).